The chain runs to 557 residues: Potassium-transporting ATPase potassium-binding subunit (557 aa).

The next 10 membrane-spanning stretches (helical) occupy residues 4 to 24, 61 to 81, 131 to 151, 174 to 194, 253 to 273, 280 to 300, 375 to 395, 412 to 432, 483 to 503, and 528 to 548; these read LGAG…VHVP, TYAL…YAFL, GLTV…VALV, LRVL…TGVV, LEVF…GTLV, LAVL…TTWA, GLYG…LMVG, CAAL…AVAL, LAIW…AGAF, and LAVV…LGPI.

This sequence belongs to the KdpA family. In terms of assembly, the system is composed of three essential subunits: KdpA, KdpB and KdpC.

The protein resides in the cell membrane. Part of the high-affinity ATP-driven potassium transport (or Kdp) system, which catalyzes the hydrolysis of ATP coupled with the electrogenic transport of potassium into the cytoplasm. This subunit binds the extracellular potassium ions and delivers the ions to the membrane domain of KdpB through an intramembrane tunnel. The sequence is that of Potassium-transporting ATPase potassium-binding subunit from Kineococcus radiotolerans (strain ATCC BAA-149 / DSM 14245 / SRS30216).